Consider the following 597-residue polypeptide: Arginine--tRNA ligase (597 aa).

The 'HIGH' region signature appears at 125-135 (PNTNKPLHLGH).

This sequence belongs to the class-I aminoacyl-tRNA synthetase family. In terms of assembly, monomer.

The protein localises to the cytoplasm. It carries out the reaction tRNA(Arg) + L-arginine + ATP = L-arginyl-tRNA(Arg) + AMP + diphosphate. The sequence is that of Arginine--tRNA ligase from Bacteroides fragilis (strain ATCC 25285 / DSM 2151 / CCUG 4856 / JCM 11019 / LMG 10263 / NCTC 9343 / Onslow / VPI 2553 / EN-2).